We begin with the raw amino-acid sequence, 114 residues long: MRFLNNKHREKGLKAEEEACGFLKSLGFEMVERNFFSQFGEIDIIALKKGVLHFIEVKSGENFDPIYAITPSKLKKMIKTIRCYLSQKDPNSDFCIDALIVKNGKFELLENITF.

Belongs to the UPF0102 family.

In Helicobacter pylori (strain ATCC 700392 / 26695) (Campylobacter pylori), this protein is UPF0102 protein HP_0823.